The chain runs to 231 residues: L-ribulose-5-phosphate 4-epimerase (231 aa).

Substrate is bound by residues 27-28, 44-45, and 74-75; these read GN, SG, and SS. D76, H95, and H97 together coordinate Zn(2+). D120 serves as the catalytic Proton donor/acceptor. H171 lines the Zn(2+) pocket. Residue Y229 is the Proton donor/acceptor of the active site.

Belongs to the aldolase class II family. AraD/FucA subfamily. As to quaternary structure, homotetramer. Requires Zn(2+) as cofactor.

The enzyme catalyses L-ribulose 5-phosphate = D-xylulose 5-phosphate. Its pathway is carbohydrate degradation; L-arabinose degradation via L-ribulose; D-xylulose 5-phosphate from L-arabinose (bacterial route): step 3/3. Its function is as follows. Involved in the degradation of L-arabinose. Catalyzes the interconversion of L-ribulose 5-phosphate (LRu5P) and D-xylulose 5-phosphate (D-Xu5P) via a retroaldol/aldol mechanism (carbon-carbon bond cleavage analogous to a class II aldolase reaction). This is L-ribulose-5-phosphate 4-epimerase from Salmonella typhimurium (strain LT2 / SGSC1412 / ATCC 700720).